A 58-amino-acid polypeptide reads, in one-letter code: UPF0434 protein Swoo_1821 (58 aa).

This sequence belongs to the UPF0434 family.

The sequence is that of UPF0434 protein Swoo_1821 from Shewanella woodyi (strain ATCC 51908 / MS32).